The following is a 215-amino-acid chain: Histidine biosynthesis bifunctional protein HisIE (215 aa).

The interval 1 to 126 (MSHSDLPLAN…GHKSPPPADM (126 aa)) is phosphoribosyl-AMP cyclohydrolase. A phosphoribosyl-ATP pyrophosphohydrolase region spans residues 127–215 (LTELARVIGD…VYRKLGDRRR (89 aa)).

This sequence in the N-terminal section; belongs to the PRA-CH family. In the C-terminal section; belongs to the PRA-PH family.

It localises to the cytoplasm. It catalyses the reaction 1-(5-phospho-beta-D-ribosyl)-ATP + H2O = 1-(5-phospho-beta-D-ribosyl)-5'-AMP + diphosphate + H(+). The catalysed reaction is 1-(5-phospho-beta-D-ribosyl)-5'-AMP + H2O = 1-(5-phospho-beta-D-ribosyl)-5-[(5-phospho-beta-D-ribosylamino)methylideneamino]imidazole-4-carboxamide. It participates in amino-acid biosynthesis; L-histidine biosynthesis; L-histidine from 5-phospho-alpha-D-ribose 1-diphosphate: step 2/9. The protein operates within amino-acid biosynthesis; L-histidine biosynthesis; L-histidine from 5-phospho-alpha-D-ribose 1-diphosphate: step 3/9. The protein is Histidine biosynthesis bifunctional protein HisIE (hisI) of Synechocystis sp. (strain ATCC 27184 / PCC 6803 / Kazusa).